Here is a 94-residue protein sequence, read N- to C-terminus: Integration host factor subunit beta (94 aa).

Belongs to the bacterial histone-like protein family. In terms of assembly, heterodimer of an alpha and a beta chain.

This protein is one of the two subunits of integration host factor, a specific DNA-binding protein that functions in genetic recombination as well as in transcriptional and translational control. In Haemophilus influenzae (strain 86-028NP), this protein is Integration host factor subunit beta.